The sequence spans 26 residues: PRKCH upstream open reading frame 2 (26 aa).

Interacts with protein kinase C eta as well as other protein kinases including PRKCD, PRKCQ and PRKCE but not with PRKCG or PRKCZ; the interactions lead to inhibition of kinase activity.

Product of an upstream open reading frame (ORF) of PRKCH which regulates translation of the downstream protein kinase C eta (PKC-eta) ORF. Functions as a repressive element that maintains low basal levels of PKC-eta in growing cells but enhances its expression during stress conditions induced by amino acid starvation in a EIF2AK4/GCN2-dependent manner. In addition to its role in regulating PKC-eta translation, also inhibits the kinase activity of PKC-eta as well as other protein kinases including PRKCD, PRKCQ and PRKCE but not PRKCA, PRKCG or PRKCZ. This chain is PRKCH upstream open reading frame 2, found in Homo sapiens (Human).